Reading from the N-terminus, the 86-residue chain is Anti-adapter protein IraP (86 aa).

Residues 1-42 are a coiled coil; it reads MKNLIAELLVKLAQKEEESKELVAQVEALEIVVTALLRQMAQ.

Belongs to the IraP family. In terms of assembly, interacts with RssB.

It localises to the cytoplasm. Functionally, inhibits RpoS proteolysis by regulating RssB activity, thereby increasing the stability of the sigma stress factor RpoS especially during phosphate starvation, but also in stationary phase and during nitrogen starvation. Its effect on RpoS stability is due to its interaction with RssB, which probably blocks the interaction of RssB with RpoS, and the consequent delivery of the RssB-RpoS complex to the ClpXP protein degradation pathway. The polypeptide is Anti-adapter protein IraP (Enterobacter sp. (strain 638)).